Here is a 201-residue protein sequence, read N- to C-terminus: Small ribosomal subunit protein uS2 (201 aa).

It belongs to the universal ribosomal protein uS2 family. In terms of assembly, part of the 50S ribosomal subunit.

This is Small ribosomal subunit protein uS2 from Thermococcus kodakarensis (strain ATCC BAA-918 / JCM 12380 / KOD1) (Pyrococcus kodakaraensis (strain KOD1)).